The following is a 901-amino-acid chain: HTH-type transcriptional regulator MalT (901 aa).

39-46 (SPAGYGKT) is a binding site for ATP. One can recognise an HTH luxR-type domain in the interval 829-894 (ELIRTSPLTQ…DAVQHAQQLL (66 aa)). The segment at residues 853-872 (NEQIAGELAVAATTIKTHIR) is a DNA-binding region (H-T-H motif).

It belongs to the MalT family. In terms of assembly, monomer in solution. Oligomerizes to an active state in the presence of the positive effectors ATP and maltotriose.

Activated by ATP and maltotriose, which are both required for DNA binding. In terms of biological role, positively regulates the transcription of the maltose regulon whose gene products are responsible for uptake and catabolism of malto-oligosaccharides. Specifically binds to the promoter region of its target genes, recognizing a short DNA motif called the MalT box. The polypeptide is HTH-type transcriptional regulator MalT (Enterobacter sp. (strain 638)).